A 149-amino-acid chain; its full sequence is Nucleoside diphosphate kinase (149 aa).

K9, F57, R85, T91, R102, and N112 together coordinate ATP. Residue H115 is the Pros-phosphohistidine intermediate of the active site.

The protein belongs to the NDK family. Mg(2+) serves as cofactor.

It is found in the cytoplasm. The catalysed reaction is a 2'-deoxyribonucleoside 5'-diphosphate + ATP = a 2'-deoxyribonucleoside 5'-triphosphate + ADP. It catalyses the reaction a ribonucleoside 5'-diphosphate + ATP = a ribonucleoside 5'-triphosphate + ADP. Functionally, major role in the synthesis of nucleoside triphosphates other than ATP. The ATP gamma phosphate is transferred to the NDP beta phosphate via a ping-pong mechanism, using a phosphorylated active-site intermediate. The sequence is that of Nucleoside diphosphate kinase from Methanosarcina barkeri (strain Fusaro / DSM 804).